A 304-amino-acid chain; its full sequence is IHSADPKDPTYNTFAAALNFIGSDNALKLIVAVLAGFIAMSIADRPGFAPGMVGGFMATQANAGFLGGLIAGFLAGYVVILLKKLFVFIPQSLDGLKPVLIYPLLGIFITGVLMQFVINTPVAAFMNFLTNWLESLGTGNLVLMGIILGGMMAIDMGGPLNKAAFTFGIAMIDAGNYAPHAAIMAGGMVPPLGIALATTFFRHKFSKRDREAGITCYFMGAAFVTEGAIPFAAADLRVIPAAVIGSAVAGGLTEFFRVTLPAPHGGVFVAFITNHPLLYLLSIVIGAIVTAVILGIIKKPVEEK.

A PTS EIIC type-2 domain is found at 1–304 (IHSADPKDPT…GIIKKPVEEK (304 aa)). 8 helical membrane passes run 20–40 (FIGSDNALKLIVAVLAGFIAM), 62–82 (NAGFLGGLIAGFLAGYVVILL), 98–118 (PVLIYPLLGIFITGVLMQFVI), 140–160 (NLVLMGIILGGMMAIDMGGPL), 181–201 (AAIMAGGMVPPLGIALATTFF), 214–234 (ITCYFMGAAFVTEGAIPFAAA), 238–258 (VIPAAVIGSAVAGGLTEFFRV), and 277–297 (LLYLLSIVIGAIVTAVILGII).

It localises to the cell membrane. Functionally, the phosphoenolpyruvate-dependent sugar phosphotransferase system (PTS), a major carbohydrate active -transport system, catalyzes the phosphorylation of incoming sugar substrates concomitant with their translocation across the cell membrane. This system is involved in fructose transport. The protein is Fructose permease IIC component (fruA) of Bacillus amyloliquefaciens (Bacillus velezensis).